The sequence spans 556 residues: Secreted lipase 4 (556 aa).

The N-terminal stretch at 1–21 (MKLLTNIGTLLALSPVQQVSA) is a signal peptide. 5 N-linked (GlcNAc...) asparagine glycosylation sites follow: N46, N263, N305, N411, and N453.

The protein belongs to the type-B carboxylesterase/lipase family.

The protein resides in the secreted. It carries out the reaction a carboxylic ester + H2O = an alcohol + a carboxylate + H(+). Functionally, secreted lipase involved in plant virulence. Has a substrate preference for p-nitrophenyl esters with a carbon chain length of C12 (p-nitrophenyl laureate). In Gibberella zeae (strain ATCC MYA-4620 / CBS 123657 / FGSC 9075 / NRRL 31084 / PH-1) (Wheat head blight fungus), this protein is Secreted lipase 4.